A 680-amino-acid chain; its full sequence is MKSQNKYSIRKFSVGASSILIATLLFLSGGQAQAAEKQVNMGNSQEDTVTAQSIGDQQTRENANYQRENGVDEQQHTENLTKNLHNDKTISEENHRKTDDLNKDQLKDDKKSSLNNKNIQRDTTKNNNANPRDVNQGLEQAINDGKQSKVASQQQSKEADNSQDLNANNNLPSQSRTKVSPSLNKSDQTSQREIVNETEIEKVQPQQKNQANDKITDHNFNNEQEVKPQKDEKTLSVSDLKNNQKSPVEPTKDNDKKNGLNLLKSSAVATLPNKGTKELTAKAKGDQTNKVAKQGQYKNQDPIVLVHGFNGFTDDINPSVLAHYWGGNKMNIRQDLEENGYKAYEASISAFGSNYDRAVELYYYIKGGRVDYGAAHAAKYGHERYGKTYEGIYKDWKPGQKVHLVGHSMGGQTIRQLEELLRNGSREEIEYQKKHSGEISPLFKGNNDNMISSITTLGTPHNGTHASDLAGNEALVRQIVFDIGKMFGNKNSRVDFGLAQWGLKQKPNESYIDYVKRVKQSNLWKSKDNGFYDLTREGATDLNRKTSLNPNIVYKTYTGEATHKALNSDRQKADLNMFFPFVITGNLIGKATEKEWRENDGLVSVISSQHPFNQAYTNATDKIQKGIWQVTPTKHDWDHVDFVGQDSSDTVRTREELQDFWHHLADDLVKTEKVTDTKQA.

Residues 1–34 (MKSQNKYSIRKFSVGASSILIATLLFLSGGQAQA) form the signal peptide. The propeptide occupies 35–290 (AEKQVNMGNS…AKAKGDQTNK (256 aa)). 2 disordered regions span residues 39–58 (VNMGNSQEDTVTAQSIGDQQ) and 82–260 (KNLH…KNGL). The span at 40-58 (NMGNSQEDTVTAQSIGDQQ) shows a compositional bias: polar residues. Residues 84–112 (LHNDKTISEENHRKTDDLNKDQLKDDKKS) are compositionally biased toward basic and acidic residues. Composition is skewed to polar residues over residues 162–193 (SQDLNANNNLPSQSRTKVSPSLNKSDQTSQRE) and 204–223 (QPQQKNQANDKITDHNFNNE). The segment covering 224-234 (QEVKPQKDEKT) has biased composition (basic and acidic residues). Positions 235-246 (LSVSDLKNNQKS) are enriched in polar residues. Ser408 functions as the Nucleophile in the catalytic mechanism. The active-site Charge relay system is Asp600. Position 638 (Asp638) interacts with Ca(2+). His639 serves as the catalytic Charge relay system. 3 residues coordinate Ca(2+): Asp641, Asp646, and Asp649.

The protein belongs to the AB hydrolase superfamily. Lipase family.

Its subcellular location is the secreted. It carries out the reaction a triacylglycerol + H2O = a diacylglycerol + a fatty acid + H(+). The protein is Lipase 1 (lip1) of Staphylococcus aureus (strain MRSA252).